The following is a 585-amino-acid chain: Chaperonin GroEL, chloroplastic (585 aa).

ATP contacts are provided by residues T55 to P58, D113 to T117, G442, N507 to A509, and D523.

Belongs to the chaperonin (HSP60) family. Forms a cylinder of 14 subunits composed of two heptameric rings stacked back-to-back. Interacts with the co-chaperonin GroES.

The protein localises to the plastid. The protein resides in the chloroplast. It carries out the reaction ATP + H2O + a folded polypeptide = ADP + phosphate + an unfolded polypeptide.. Its function is as follows. Together with its co-chaperonin GroES, plays an essential role in assisting protein folding. The GroEL-GroES system forms a nano-cage that allows encapsulation of the non-native substrate proteins and provides a physical environment optimized to promote and accelerate protein folding. This Pyrenomonas salina protein is Chaperonin GroEL, chloroplastic.